Here is a 93-residue protein sequence, read N- to C-terminus: Integration host factor subunit beta (93 aa).

This sequence belongs to the bacterial histone-like protein family. Heterodimer of an alpha and a beta chain.

Its function is as follows. This protein is one of the two subunits of integration host factor, a specific DNA-binding protein that functions in genetic recombination as well as in transcriptional and translational control. In Idiomarina loihiensis (strain ATCC BAA-735 / DSM 15497 / L2-TR), this protein is Integration host factor subunit beta.